Here is a 460-residue protein sequence, read N- to C-terminus: NADH-quinone oxidoreductase subunit N (460 aa).

Transmembrane regions (helical) follow at residues 2–22 (LLPEITLTLTALLSQFFAVML), 28–48 (IVANITILLTILTIFIILKYS), 65–85 (ANIANYKAIILIFTIISMIIY), 104–124 (ILLSTVGIFVAISAQNFLLLF), 155–175 (FILGSLVSCLSLFGISFIYGF), 196–216 (LGLVIGVVLFLSSIFFKLSSA), 230–250 (PIASVTYFTAASKIGAVAILL), 263–283 (ISYNLIKIIALLSMIFGALGA), 292–312 (LMAYSTILNIGYVLIGVLLRT), 321–341 (LYMLIYAAASIGFFTCLIMLL), 363–383 (IAAAICIIMFSMIGIPPLAGF), 400–420 (LLAYFGIFTSVIAAFYYLKII), and 438–458 (YGLLLINFVVIGFLLFGSFII).

The protein belongs to the complex I subunit 2 family. As to quaternary structure, NDH-1 is composed of 14 different subunits. Subunits NuoA, H, J, K, L, M, N constitute the membrane sector of the complex.

Its subcellular location is the cell inner membrane. The enzyme catalyses a quinone + NADH + 5 H(+)(in) = a quinol + NAD(+) + 4 H(+)(out). Functionally, NDH-1 shuttles electrons from NADH, via FMN and iron-sulfur (Fe-S) centers, to quinones in the respiratory chain. The immediate electron acceptor for the enzyme in this species is believed to be ubiquinone. Couples the redox reaction to proton translocation (for every two electrons transferred, four hydrogen ions are translocated across the cytoplasmic membrane), and thus conserves the redox energy in a proton gradient. The chain is NADH-quinone oxidoreductase subunit N from Rickettsia bellii (strain RML369-C).